The following is a 232-amino-acid chain: Small ribosomal subunit protein uS3 (232 aa).

The KH type-2 domain occupies 39-107; it reads VRQYLTKALK…PAQINIAEVR (69 aa).

The protein belongs to the universal ribosomal protein uS3 family. In terms of assembly, part of the 30S ribosomal subunit. Forms a tight complex with proteins S10 and S14.

Functionally, binds the lower part of the 30S subunit head. Binds mRNA in the 70S ribosome, positioning it for translation. The protein is Small ribosomal subunit protein uS3 of Pseudoalteromonas atlantica (strain T6c / ATCC BAA-1087).